A 676-amino-acid polypeptide reads, in one-letter code: ATP-dependent zinc metalloprotease FTSH 2, chloroplastic (676 aa).

The N-terminal 32 residues, 1 to 32 (MAPTSMSLAAKTPLPFSTLPSSGVAQRPVSVT), are a transit peptide targeting the chloroplast. The chain crosses the membrane as a helical span at residues 155 to 175 (LLFNLIGNLAFPLILIGGLFL). Residue 254–261 (GPPGTGKT) coordinates ATP. A Zn(2+)-binding site is contributed by H475. E476 is a catalytic residue. Residues H479 and D553 each coordinate Zn(2+).

In the N-terminal section; belongs to the AAA ATPase family. The protein in the C-terminal section; belongs to the peptidase M41 family. Requires Zn(2+) as cofactor.

It is found in the plastid. Its subcellular location is the chloroplast thylakoid membrane. In terms of biological role, probable ATP-dependent zinc metallopeptidase. The protein is ATP-dependent zinc metalloprotease FTSH 2, chloroplastic (FTSH2) of Oryza sativa subsp. japonica (Rice).